Consider the following 401-residue polypeptide: F-box protein At2g43440 (401 aa).

The 47-residue stretch at 7-53 (NTNSIYIVPELLEDIFLRLPLKSILKFKTVSRQWRSILESKLFVERR) folds into the F-box domain.

This chain is F-box protein At2g43440, found in Arabidopsis thaliana (Mouse-ear cress).